Here is a 112-residue protein sequence, read N- to C-terminus: uncharacterized protein (112 aa).

The next 2 membrane-spanning stretches (helical) occupy residues L55–F75 and L91–L111.

It is found in the membrane. This is an uncharacterized protein from Saccharomyces cerevisiae (strain ATCC 204508 / S288c) (Baker's yeast).